Here is a 283-residue protein sequence, read N- to C-terminus: Phosphatidylserine decarboxylase proenzyme (283 aa).

Residues D96, H152, and S250 each act as charge relay system; for autoendoproteolytic cleavage activity in the active site. The active-site Schiff-base intermediate with substrate; via pyruvic acid; for decarboxylase activity is the S250. Position 250 is a pyruvic acid (Ser); by autocatalysis (S250).

It belongs to the phosphatidylserine decarboxylase family. PSD-B subfamily. Prokaryotic type I sub-subfamily. Heterodimer of a large membrane-associated beta subunit and a small pyruvoyl-containing alpha subunit. It depends on pyruvate as a cofactor. Is synthesized initially as an inactive proenzyme. Formation of the active enzyme involves a self-maturation process in which the active site pyruvoyl group is generated from an internal serine residue via an autocatalytic post-translational modification. Two non-identical subunits are generated from the proenzyme in this reaction, and the pyruvate is formed at the N-terminus of the alpha chain, which is derived from the carboxyl end of the proenzyme. The autoendoproteolytic cleavage occurs by a canonical serine protease mechanism, in which the side chain hydroxyl group of the serine supplies its oxygen atom to form the C-terminus of the beta chain, while the remainder of the serine residue undergoes an oxidative deamination to produce ammonia and the pyruvoyl prosthetic group on the alpha chain. During this reaction, the Ser that is part of the protease active site of the proenzyme becomes the pyruvoyl prosthetic group, which constitutes an essential element of the active site of the mature decarboxylase.

The protein localises to the cell membrane. The enzyme catalyses a 1,2-diacyl-sn-glycero-3-phospho-L-serine + H(+) = a 1,2-diacyl-sn-glycero-3-phosphoethanolamine + CO2. The protein operates within phospholipid metabolism; phosphatidylethanolamine biosynthesis; phosphatidylethanolamine from CDP-diacylglycerol: step 2/2. Functionally, catalyzes the formation of phosphatidylethanolamine (PtdEtn) from phosphatidylserine (PtdSer). This chain is Phosphatidylserine decarboxylase proenzyme, found in Acinetobacter baumannii (strain AB0057).